A 183-amino-acid chain; its full sequence is Beta-defensin 129 (183 aa).

The N-terminal stretch at 1-19 (MKLLFPIFASLMLQYQVNT) is a signal peptide. 3 cysteine pairs are disulfide-bonded: cysteine 27/cysteine 53, cysteine 34/cysteine 48, and cysteine 38/cysteine 54. Positions 141 to 183 (TATSTKSNTKESRDSATASPPPAPPPPNILPTPSLELEEAEEQ) are disordered. Residues 159–170 (SPPPAPPPPNIL) are compositionally biased toward pro residues.

Belongs to the beta-defensin family.

It localises to the secreted. In terms of biological role, has antibacterial activity. The protein is Beta-defensin 129 (DEFB129) of Pan troglodytes (Chimpanzee).